A 466-amino-acid chain; its full sequence is Coagulation factor VII (466 aa).

The N-terminal stretch at M1–A20 is a signal peptide. A propeptide spanning residues A21–R60 is cleaved from the precursor. Positions A61–S105 constitute a Gla domain. Residues E66, E67, E74, E76, E79, E80, E85, E86, E89, and E95 each carry the 4-carboxyglutamate modification. C77 and C82 form a disulfide bridge. The 37-residue stretch at D106–E142 folds into the EGF-like 1; calcium-binding domain. 10 cysteine pairs are disulfide-bonded: C110–C121, C115–C130, C132–C141, C151–C162, C158–C172, C174–C187, C195–C322, C219–C224, C238–C254, and C370–C389. S112 carries an O-linked (Glc...) serine; alternate glycan. An O-linked (Xyl...) serine; alternate glycan is attached at S112. O-linked (Fuc) serine glycosylation occurs at S120. D123 is subject to (3R)-3-hydroxyaspartate. An EGF-like 2 domain is found at D147–T188. N205 carries an N-linked (GlcNAc...) asparagine glycan. The region spanning I213–R452 is the Peptidase S1 domain. Active-site charge relay system residues include H253 and D302. N-linked (GlcNAc...) asparagine glycosylation is present at N382. Residue D398 coordinates substrate. A disulfide bridge links C400 with C428. The active-site Charge relay system is S404.

It belongs to the peptidase S1 family. In terms of assembly, heterodimer of a light chain and a heavy chain linked by a disulfide bond. In terms of processing, the vitamin K-dependent, enzymatic carboxylation of some glutamate residues allows the modified protein to bind calcium. The iron and 2-oxoglutarate dependent 3-hydroxylation of aspartate and asparagine is (R) stereospecific within EGF domains. Post-translationally, O-glycosylated. O-fucosylated by POFUT1 on a conserved serine or threonine residue found in the consensus sequence C2-X(4,5)-[S/T]-C3 of EGF domains, where C2 and C3 are the second and third conserved cysteines. In terms of processing, can be either O-glucosylated or O-xylosylated at Ser-112 by POGLUT1.

It localises to the secreted. It carries out the reaction Selective cleavage of Arg-|-Ile bond in factor X to form factor Xa.. Functionally, initiates the extrinsic pathway of blood coagulation. Serine protease that circulates in the blood in a zymogen form. Factor VII is converted to factor VIIa by factor Xa, factor XIIa, factor IXa, or thrombin by minor proteolysis. In the presence of tissue factor and calcium ions, factor VIIa then converts factor X to factor Xa by limited proteolysis. Factor VIIa also converts factor IX to factor IXa in the presence of tissue factor and calcium. This chain is Coagulation factor VII (F7), found in Pan paniscus (Pygmy chimpanzee).